A 201-amino-acid polypeptide reads, in one-letter code: Small ribosomal subunit protein uS4c (201 aa).

Residues 15-43 (LGALPGLTNKRPRAGSDLRNQSRSGKKSQ) form a disordered region. The S4 RNA-binding domain maps to 89–152 (MRLDNILFRL…NSRTLIQNSL (64 aa)).

This sequence belongs to the universal ribosomal protein uS4 family. In terms of assembly, part of the 30S ribosomal subunit. Contacts protein S5. The interaction surface between S4 and S5 is involved in control of translational fidelity.

It is found in the plastid. The protein resides in the chloroplast. One of the primary rRNA binding proteins, it binds directly to 16S rRNA where it nucleates assembly of the body of the 30S subunit. In terms of biological role, with S5 and S12 plays an important role in translational accuracy. The chain is Small ribosomal subunit protein uS4c (rps4) from Panax ginseng (Korean ginseng).